The following is a 263-amino-acid chain: Metaxin-2 (263 aa).

Residue serine 2 is modified to N-acetylserine.

Belongs to the metaxin family. In terms of assembly, interacts with MTX1/metaxin-1. Associates with the mitochondrial contact site and cristae organizing system (MICOS) complex, composed of at least MICOS10/MIC10, CHCHD3/MIC19, CHCHD6/MIC25, APOOL/MIC27, IMMT/MIC60, APOO/MIC23/MIC26 and QIL1/MIC13. This complex was also known under the names MINOS or MitOS complex. The MICOS complex associates with mitochondrial outer membrane proteins SAMM50, MTX1 and MTX2 (together described as components of the mitochondrial outer membrane sorting assembly machinery (SAM) complex) and DNAJC11, mitochondrial inner membrane protein TMEM11 and with HSPA9. The MICOS and SAM complexes together with DNAJC11 are part of a large protein complex spanning both membranes termed the mitochondrial intermembrane space bridging (MIB) complex.

It localises to the mitochondrion outer membrane. The protein resides in the mitochondrion. In terms of biological role, involved in transport of proteins into the mitochondrion. In Mus musculus (Mouse), this protein is Metaxin-2 (Mtx2).